A 498-amino-acid chain; its full sequence is WD repeat-containing protein 55 homolog (498 aa).

A disordered region spans residues 1–131; the sequence is MHTHNNFKTP…ATFDLDEDDE (131 aa). 2 stretches are compositionally biased toward acidic residues: residues 12 to 23 and 31 to 48; these read DEDELDDLDEDM and IEQEVLNESDSDNDEYDL. 2 stretches are compositionally biased toward low complexity: residues 67-82 and 93-103; these read NDSSSSDDSFDPNAAD and AGGVTAGGATS. WD repeat units follow at residues 154-193, 198-237, 241-279, 282-321, 324-363, and 408-447; these read KLEDFITDICFHPDRDIIALATIIGDVHLYEYDNEANKLL, VHSKACRDVEFTEDGRFLLTCSKDKCVMVTDMETEKLKKL, AHDDAINTLHVLNENLFASGDDAGTVKLWDLRTKNAIFE, ELEDQITQLTTNEQSKLLLATSADGYLTTFNISARKMYVQ, PYEEELNCMGVYRGDSKLVVGTSKGRLYTYNWGQFGYHCD, and QHNMPIESLDVNASGELIASSSHNNDVRFWNVKYFEDFGD. The tract at residues 478–498 is disordered; it reads DLTKENADGDDDPGAGPSNMA.

The protein belongs to the WD repeat WDR55 family.

This chain is WD repeat-containing protein 55 homolog, found in Drosophila melanogaster (Fruit fly).